The primary structure comprises 329 residues: Ribosomal RNA small subunit methyltransferase C (329 aa).

Belongs to the methyltransferase superfamily. RsmC family. In terms of assembly, monomer.

It localises to the cytoplasm. The enzyme catalyses guanosine(1207) in 16S rRNA + S-adenosyl-L-methionine = N(2)-methylguanosine(1207) in 16S rRNA + S-adenosyl-L-homocysteine + H(+). Functionally, specifically methylates the guanine in position 1207 of 16S rRNA in the 30S particle. The polypeptide is Ribosomal RNA small subunit methyltransferase C (Actinobacillus pleuropneumoniae serotype 7 (strain AP76)).